A 70-amino-acid chain; its full sequence is Conotoxin Cal6.11 (70 aa).

A signal peptide spans 1–22; the sequence is MKLTCVLIIAVLILTACQFIAA. A propeptide spanning residues 23–43 is cleaved from the precursor; the sequence is DNTEYRKWRRSGTSTGMRLGS. 3 cysteine pairs are disulfide-bonded: cysteine 46-cysteine 57, cysteine 50-cysteine 62, and cysteine 56-cysteine 69. Residues proline 48 and proline 58 each carry the 4-hydroxyproline modification. Glutamate 60 and glutamate 67 each carry 4-carboxyglutamate.

Belongs to the conotoxin O1 superfamily. As to expression, expressed by the venom duct.

The protein resides in the secreted. In terms of biological role, probable neurotoxin with unknown target. Possibly targets ion channels. In Californiconus californicus (California cone), this protein is Conotoxin Cal6.11.